Here is a 570-residue protein sequence, read N- to C-terminus: Proline--tRNA ligase (570 aa).

This sequence belongs to the class-II aminoacyl-tRNA synthetase family. ProS type 1 subfamily. In terms of assembly, homodimer.

It localises to the cytoplasm. The enzyme catalyses tRNA(Pro) + L-proline + ATP = L-prolyl-tRNA(Pro) + AMP + diphosphate. In terms of biological role, catalyzes the attachment of proline to tRNA(Pro) in a two-step reaction: proline is first activated by ATP to form Pro-AMP and then transferred to the acceptor end of tRNA(Pro). As ProRS can inadvertently accommodate and process non-cognate amino acids such as alanine and cysteine, to avoid such errors it has two additional distinct editing activities against alanine. One activity is designated as 'pretransfer' editing and involves the tRNA(Pro)-independent hydrolysis of activated Ala-AMP. The other activity is designated 'posttransfer' editing and involves deacylation of mischarged Ala-tRNA(Pro). The misacylated Cys-tRNA(Pro) is not edited by ProRS. This Shewanella oneidensis (strain ATCC 700550 / JCM 31522 / CIP 106686 / LMG 19005 / NCIMB 14063 / MR-1) protein is Proline--tRNA ligase.